Here is a 462-residue protein sequence, read N- to C-terminus: Fasciclin-like arabinogalactan protein 18 (462 aa).

A signal peptide spans 1–25; sequence MDRCIYGCSVITIFFSFFFLLNASA. N-linked (GlcNAc...) asparagine glycans are attached at residues asparagine 32, asparagine 77, and asparagine 293. FAS1 domains follow at residues 40–185 and 271–414; these read NSNS…ERLL and VKDF…DGVL.

The protein belongs to the fasciclin-like AGP family.

The protein resides in the secreted. May be a cell surface adhesion protein. This Arabidopsis thaliana (Mouse-ear cress) protein is Fasciclin-like arabinogalactan protein 18 (FLA18).